We begin with the raw amino-acid sequence, 285 residues long: Aquaporin-6 (285 aa).

Transmembrane regions (helical) follow at residues I36–C56, Y76–L96, and I105–G125. The NPA 1 motif lies at N86–V88. An N-linked (GlcNAc...) asparagine glycan is attached at N128. Helical transmembrane passes span V143 to M163 and G177 to A197. An NPA 2 motif is present at residues N206–M208. The helical transmembrane segment at Y225–T245 threads the bilayer.

It belongs to the MIP/aquaporin (TC 1.A.8) family.

The protein resides in the cell membrane. In terms of biological role, probable water-specific aquaporin that may modulate the water content and osmolytes during anhydrobiosis. This chain is Aquaporin-6, found in Milnesium tardigradum (Water bear).